The primary structure comprises 188 residues: Shikimate kinase (188 aa).

An ATP-binding site is contributed by 21 to 26; sequence GAGKTT. Threonine 25 is a binding site for Mg(2+). 3 residues coordinate substrate: aspartate 43, arginine 67, and glycine 90. Arginine 130 contributes to the ATP binding site. Arginine 148 serves as a coordination point for substrate.

This sequence belongs to the shikimate kinase family. Monomer. Mg(2+) is required as a cofactor.

Its subcellular location is the cytoplasm. The catalysed reaction is shikimate + ATP = 3-phosphoshikimate + ADP + H(+). The protein operates within metabolic intermediate biosynthesis; chorismate biosynthesis; chorismate from D-erythrose 4-phosphate and phosphoenolpyruvate: step 5/7. Catalyzes the specific phosphorylation of the 3-hydroxyl group of shikimic acid using ATP as a cosubstrate. The protein is Shikimate kinase of Geobacillus thermodenitrificans (strain NG80-2).